A 224-amino-acid chain; its full sequence is Cysteine S-methyltransferase NleE (224 aa).

The tract at residues 49–52 (GITR) is interaction with host proteins TAB2, TAB3 and ZRANB3. Residues Ala-92, Ser-98, Arg-107, Gln-111, Tyr-204, and Glu-208 each coordinate S-adenosyl-L-methionine.

The protein belongs to the NleE/OspZ family. Monomer.

Its subcellular location is the secreted. It localises to the host nucleus. The enzyme catalyses L-cysteinyl-[protein] + S-adenosyl-L-methionine = S-methyl-L-cysteinyl-[protein] + S-adenosyl-L-homocysteine + H(+). In terms of biological role, cysteine methyltransferase effector that inhibits host cell NF-kappa-B activation by preventing nuclear translocation of host protein RELA/p65. Acts by mediating cysteine methylation of host proteins TAB2 and TAB3: methylation of a conserved cysteine residue of the RanBP2-type zinc finger (NZF) of TAB2 and TAB3 disrupts zinc-binding, thereby inactivating the ubiquitin chain-binding activity of TAB2 and TAB3, leading to NF-kappa-B inactivation. Also mediates cysteine methylation of host protein ZRANB3, inactivating its ability to bind ubiquitin chains. This chain is Cysteine S-methyltransferase NleE, found in Escherichia coli O157:H7.